The sequence spans 139 residues: MRNRTVAAGAVLTAALLGACTSHPPTHISSTASVTVNGHDRTFHIVKCGQVQWTRMIDIGSEFSGAKVVVDENAQPATTQSVRIRNVGGFSGMYSQGGDGNADMSMTGDKFTVSGTANGYQTDKPSEPAAATFKIVVTC.

The first 19 residues, 1 to 19 (MRNRTVAAGAVLTAALLGA), serve as a signal peptide directing secretion. A lipid anchor (N-palmitoyl cysteine) is attached at C20. C20 carries S-diacylglycerol cysteine lipidation.

This sequence belongs to the mycobacterial 19 kDa antigen family.

The protein resides in the cell membrane. The polypeptide is Putative lipoprotein MIP_01412 (Mycobacterium indicus pranii (strain DSM 45239 / MTCC 9506)).